The following is a 234-amino-acid chain: Glutathione S-transferase U11 (234 aa).

The 80-residue stretch at 11–90 (EYVKLLGAWP…YVDETWLSGP (80 aa)) folds into the GST N-terminal domain. Glutathione is bound by residues 21-22 (SP), 47-48 (LS), 61-62 (QI), and 74-75 (ES). The GST C-terminal domain occupies 96-228 (DPFDRAVARF…KLVQFARLKF (133 aa)).

Belongs to the GST superfamily. Tau family.

It is found in the cytoplasm. The protein localises to the cytosol. It carries out the reaction RX + glutathione = an S-substituted glutathione + a halide anion + H(+). In terms of biological role, may be involved in the conjugation of reduced glutathione to a wide number of exogenous and endogenous hydrophobic electrophiles and have a detoxification role against certain herbicides. The protein is Glutathione S-transferase U11 (GSTU11) of Arabidopsis thaliana (Mouse-ear cress).